Consider the following 212-residue polypeptide: 3-demethoxyubiquinol 3-hydroxylase (212 aa).

6 residues coordinate Fe cation: Glu61, Glu91, His94, Glu143, Glu175, and His178.

It belongs to the COQ7 family. The cofactor is Fe cation.

The protein localises to the cell membrane. The enzyme catalyses a 5-methoxy-2-methyl-3-(all-trans-polyprenyl)benzene-1,4-diol + AH2 + O2 = a 3-demethylubiquinol + A + H2O. It functions in the pathway cofactor biosynthesis; ubiquinone biosynthesis. Catalyzes the hydroxylation of 2-nonaprenyl-3-methyl-6-methoxy-1,4-benzoquinol during ubiquinone biosynthesis. The protein is 3-demethoxyubiquinol 3-hydroxylase of Methylibium petroleiphilum (strain ATCC BAA-1232 / LMG 22953 / PM1).